We begin with the raw amino-acid sequence, 71 residues long: MIQQEEIRKLEEEKKQLEGEIIDFYKMKAASEALQTQLSTDTKKDKHPDPYEFLLLRKIKHPGFNEELSPC.

Interacts with IGF2BP1 (via KH3 and KH4 domains); the interaction results in increased binding of IGF2BP1 to N6-methyladenosine (m6A)-containing mRNAs. In terms of tissue distribution, detected in colon (at protein level).

Its function is as follows. Enhances binding of IGF2BP1 to N6-methyladenosine (m6A)-containing mRNAs, thereby contributing to increased mRNA stability. Also increases the interaction of IGF2BP1 with RNA stabilizers ELAVL1/HUR, MATR3 and PABPC1, and increases the interaction of RNA stabilizers ELAVL1/HUR, MATR3 and PABPC1 with m6A-containing mRNAs. Contributes to MYC stability by enhancing binding of IGF2BP1 to m6A-containing MYC mRNAs and increasing recruitment of RNA stabilizing proteins to m6A-containing MYC mRNAs. The protein is Putative RNA-binding regulatory peptide of Homo sapiens (Human).